Reading from the N-terminus, the 564-residue chain is Urocanate hydratase (564 aa).

NAD(+) is bound by residues 58–59 (GG), Gln136, 182–184 (GMG), Glu202, Arg207, 245–246 (NA), 266–270 (QTSAH), 276–277 (YL), and Tyr325. The active site involves Cys413. Gly495 serves as a coordination point for NAD(+).

This sequence belongs to the urocanase family. NAD(+) is required as a cofactor.

Its subcellular location is the cytoplasm. The catalysed reaction is 4-imidazolone-5-propanoate = trans-urocanate + H2O. It participates in amino-acid degradation; L-histidine degradation into L-glutamate; N-formimidoyl-L-glutamate from L-histidine: step 2/3. Functionally, catalyzes the conversion of urocanate to 4-imidazolone-5-propionate. The polypeptide is Urocanate hydratase (Vibrio atlanticus (strain LGP32) (Vibrio splendidus (strain Mel32))).